A 364-amino-acid chain; its full sequence is Glutamate 5-kinase (364 aa).

ATP is bound at residue lysine 7. Substrate is bound by residues serine 47, aspartate 134, and asparagine 146. Residues 166 to 167 (TD) and 209 to 215 (TGGIKTK) each bind ATP. The PUA domain maps to 274-349 (QGTLHVDDGA…NRIKSTQYPV (76 aa)).

This sequence belongs to the glutamate 5-kinase family.

Its subcellular location is the cytoplasm. It carries out the reaction L-glutamate + ATP = L-glutamyl 5-phosphate + ADP. It participates in amino-acid biosynthesis; L-proline biosynthesis; L-glutamate 5-semialdehyde from L-glutamate: step 1/2. Catalyzes the transfer of a phosphate group to glutamate to form L-glutamate 5-phosphate. This chain is Glutamate 5-kinase, found in Prochlorococcus marinus (strain SARG / CCMP1375 / SS120).